A 390-amino-acid chain; its full sequence is Putative transposase YncI (390 aa).

It belongs to the transposase 11 family.

The sequence is that of Putative transposase YncI (yncI) from Escherichia coli O157:H7.